The primary structure comprises 100 residues: Putative pterin-4-alpha-carbinolamine dehydratase (100 aa).

The protein belongs to the pterin-4-alpha-carbinolamine dehydratase family.

It carries out the reaction (4aS,6R)-4a-hydroxy-L-erythro-5,6,7,8-tetrahydrobiopterin = (6R)-L-erythro-6,7-dihydrobiopterin + H2O. The sequence is that of Putative pterin-4-alpha-carbinolamine dehydratase from Bradyrhizobium sp. (strain ORS 278).